Reading from the N-terminus, the 266-residue chain is Heat-inducible transcription repressor HrcA (266 aa).

This sequence belongs to the HrcA family.

Negative regulator of class I heat shock genes (grpE-dnaK-dnaJ and groELS operons). Prevents heat-shock induction of these operons. This chain is Heat-inducible transcription repressor HrcA, found in Helicobacter pylori (strain J99 / ATCC 700824) (Campylobacter pylori J99).